Reading from the N-terminus, the 361-residue chain is Peptide chain release factor 1 (361 aa).

An N5-methylglutamine modification is found at Gln235. The disordered stretch occupies residues 287–309 (QKEASAMRSAQVGSGDRSERIRT).

The protein belongs to the prokaryotic/mitochondrial release factor family. In terms of processing, methylated by PrmC. Methylation increases the termination efficiency of RF1.

The protein resides in the cytoplasm. Its function is as follows. Peptide chain release factor 1 directs the termination of translation in response to the peptide chain termination codons UAG and UAA. The sequence is that of Peptide chain release factor 1 from Chlamydia caviae (strain ATCC VR-813 / DSM 19441 / 03DC25 / GPIC) (Chlamydophila caviae).